Here is a 330-residue protein sequence, read N- to C-terminus: Diacylglycerol acyltransferase/mycolyltransferase Ag85B (330 aa).

The N-terminal stretch at 1–40 (MTDLSEKVRAWGRRLVVGAAAAATLPGLIGIAGGAATANA) is a signal peptide. Residue 82-83 (LR) coordinates substrate. The interval 98-108 (FEWYYQSGLSV) is fibronectin-binding. Cysteines 127 and 132 form a disulfide. 2 residues coordinate substrate: serine 166 and aspartate 194. Serine 166 serves as the catalytic Nucleophile. Glutamate 270 is an active-site residue. Substrate contacts are provided by residues 272-275 (FVRS), lysine 279, and 302-304 (HSW). Histidine 302 is a catalytic residue.

It belongs to the mycobacterial A85 antigen family.

It localises to the secreted. It carries out the reaction 2 alpha,alpha'-trehalose 6-mycolate = alpha,alpha'-trehalose 6,6'-bismycolate + alpha,alpha-trehalose. The catalysed reaction is an acyl-CoA + a 1,2-diacyl-sn-glycerol = a triacyl-sn-glycerol + CoA. Its function is as follows. The antigen 85 proteins (FbpA, FbpB, FbpC) are responsible for the high affinity of mycobacteria for fibronectin, a large adhesive glycoprotein, which facilitates the attachment of M.tuberculosis to murine alveolar macrophages (AMs). They also help to maintain the integrity of the cell wall by catalyzing the transfer of mycolic acids to cell wall arabinogalactan and through the synthesis of alpha,alpha-trehalose dimycolate (TDM, cord factor). They catalyze the transfer of a mycoloyl residue from one molecule of alpha,alpha-trehalose monomycolate (TMM) to another TMM, leading to the formation of TDM. This chain is Diacylglycerol acyltransferase/mycolyltransferase Ag85B (fbpB), found in Mycobacterium intracellulare (strain ATCC 13950 / DSM 43223 / JCM 6384 / NCTC 13025 / 3600).